Reading from the N-terminus, the 415-residue chain is Serine hydroxymethyltransferase (415 aa).

Residues Leu121 and 125–127 each bind (6S)-5,6,7,8-tetrahydrofolate; that span reads GHL. Position 230 is an N6-(pyridoxal phosphate)lysine (Lys230). Residue 355-357 participates in (6S)-5,6,7,8-tetrahydrofolate binding; the sequence is SPF.

This sequence belongs to the SHMT family. As to quaternary structure, homodimer. Requires pyridoxal 5'-phosphate as cofactor.

It localises to the cytoplasm. The catalysed reaction is (6R)-5,10-methylene-5,6,7,8-tetrahydrofolate + glycine + H2O = (6S)-5,6,7,8-tetrahydrofolate + L-serine. It participates in one-carbon metabolism; tetrahydrofolate interconversion. The protein operates within amino-acid biosynthesis; glycine biosynthesis; glycine from L-serine: step 1/1. Catalyzes the reversible interconversion of serine and glycine with tetrahydrofolate (THF) serving as the one-carbon carrier. This reaction serves as the major source of one-carbon groups required for the biosynthesis of purines, thymidylate, methionine, and other important biomolecules. Also exhibits THF-independent aldolase activity toward beta-hydroxyamino acids, producing glycine and aldehydes, via a retro-aldol mechanism. This chain is Serine hydroxymethyltransferase, found in Lactococcus lactis subsp. lactis (strain IL1403) (Streptococcus lactis).